The chain runs to 248 residues: 14-3-3 protein sigma (248 aa).

Ser-5, Ser-74, and Ser-248 each carry phosphoserine.

This sequence belongs to the 14-3-3 family. Homodimer. Interacts with KRT17 and SAMSN1. Found in a complex with XPO7, EIF4A1, ARHGAP1, VPS26A, VPS29 and VPS35. Interacts with GAB2. Interacts with SRPK2. Interacts with COPS6. Interacts with COP1; this interaction leads to proteasomal degradation. Interacts with the 'Thr-369' phosphorylated form of DAPK2. Interacts with PI4KB. Interacts with SLITRK1. Interacts with LRRK2; this interaction is dependent on LRRK2 phosphorylation. Interacts with PKP3 (via N-terminus); the interaction maintains the cytoplasmic pool of PKP3, facilitates PKP3 exchange at desmosomes and restricts PKP3 localization to existing desmosome cell junctions. Interacts with LCP2. Post-translationally, ubiquitinated. Ubiquitination by RFFL induces proteasomal degradation and indirectly regulates p53/TP53 activation.

The protein localises to the cytoplasm. It is found in the nucleus. The protein resides in the secreted. In terms of biological role, adapter protein implicated in the regulation of a large spectrum of both general and specialized signaling pathways. Binds to a large number of partners, usually by recognition of a phosphoserine or phosphothreonine motif. Binding generally results in the modulation of the activity of the binding partner. Promotes cytosolic retention of GBP1 GTPase by binding to phosphorylated GBP1, thereby inhibiting the innate immune response. Also acts as a TP53/p53-regulated inhibitor of G2/M progression. When bound to KRT17, regulates protein synthesis and epithelial cell growth by stimulating Akt/mTOR pathway. Acts to maintain desmosome cell junction adhesion in epithelial cells via interacting with and sequestering PKP3 to the cytoplasm, thereby restricting its translocation to existing desmosome structures and therefore maintaining desmosome protein homeostasis. Also acts to facilitate PKP3 exchange at desmosome plaques, thereby maintaining keratinocyte intercellular adhesion. May also regulate MDM2 autoubiquitination and degradation and thereby activate p53/TP53. The polypeptide is 14-3-3 protein sigma (SFN) (Bos taurus (Bovine)).